The sequence spans 440 residues: Damage-control phosphatase ARMT1 (440 aa).

Aspartate 252 and asparagine 253 together coordinate Mn(2+). A substrate-binding site is contributed by 252 to 253 (DN). Positions 257 and 290 each coordinate S-adenosyl-L-methionine. Mn(2+) is bound at residue aspartate 290. Substrate contacts are provided by residues 366–370 (DLNYR) and lysine 403. Residues 400 to 403 (RTLK) carry the Subfamily III RTxK motif motif.

This sequence belongs to the damage-control phosphatase family. Sugar phosphate phosphatase III subfamily. Mn(2+) is required as a cofactor. The cofactor is Ni(2+). Post-translationally, automethylated.

The catalysed reaction is beta-D-fructose 1-phosphate + H2O = D-fructose + phosphate. It carries out the reaction beta-D-fructose 6-phosphate = dihydroxyacetone + D-glyceraldehyde 3-phosphate. The enzyme catalyses L-glutamyl-[protein] + S-adenosyl-L-methionine = [protein]-L-glutamate 5-O-methyl ester + S-adenosyl-L-homocysteine. Metal-dependent phosphatase that shows phosphatase activity against several substrates, including fructose-1-phosphate and fructose-6-phosphate. Its preference for fructose-1-phosphate, a strong glycating agent that causes DNA damage rather than a canonical yeast metabolite, suggests a damage-control function in hexose phosphate metabolism. Has also been shown to have O-methyltransferase activity that methylates glutamate residues of target proteins to form gamma-glutamyl methyl ester residues. Possibly methylates PCNA, suggesting it is involved in the DNA damage response. The chain is Damage-control phosphatase ARMT1 from Xenopus tropicalis (Western clawed frog).